The following is a 336-amino-acid chain: Ultraviolet-sensitive opsin (336 aa).

The Extracellular segment spans residues 1–29 (MDAWTYQFGNLSKISPFEGPQYHLAPKWA). A glycan (N-linked (GlcNAc...) asparagine) is linked at N10. Residues 30-54 (FYLQAAFMGFVFFVGTPLNAIVLFV) traverse the membrane as a helical segment. Over 55–66 (TMKYKKLRQPLN) the chain is Cytoplasmic. The chain crosses the membrane as a helical span at residues 67 to 91 (YILVNISLGGFIFDTFSVSQVFFSA). Topologically, residues 92 to 106 (LRGYYFFGYTLCAME) are extracellular. C103 and C180 form a disulfide bridge. A helical transmembrane segment spans residues 107–126 (AAMGSIAGLVTGWSLAVLAF). Residues 127 to 145 (ERYVVICKPFGSFKFGQSQ) are Cytoplasmic-facing. Residues 146–169 (ALGAVALTWIIGIGCATPPFWGWS) traverse the membrane as a helical segment. Residues 170-195 (RYIPEGIGTACGPDWYTKNEEYNTES) are Extracellular-facing. A helical membrane pass occupies residues 196–223 (YTYFLLVSCFMMPIMIITFSYSQLLGAL). The Cytoplasmic portion of the chain corresponds to 224–245 (RAVAAQQAESASTQKAEKEVSR). A helical membrane pass occupies residues 246 to 269 (MVVVMVGSFVVCYGPYAITALYFS). Residues 270–277 (YAEDSNKD) lie on the Extracellular side of the membrane. Residues 278 to 302 (YRLVAIPSLFSKSSCVYNPLIYAFM) form a helical membrane-spanning segment. N6-(retinylidene)lysine is present on K289. Residues 303–336 (NKQFNACIMETVFGKKIDESSEVSSKTETSSVSA) lie on the Cytoplasmic side of the membrane.

The protein belongs to the G-protein coupled receptor 1 family. Opsin subfamily. Phosphorylated on some or all of the serine and threonine residues present in the C-terminal region.

The protein resides in the membrane. Visual pigments are the light-absorbing molecules that mediate vision. They consist of an apoprotein, opsin, covalently linked to cis-retinal. The chain is Ultraviolet-sensitive opsin from Carassius auratus (Goldfish).